Consider the following 435-residue polypeptide: Enolase (435 aa).

Residues H155 and E164 each coordinate substrate. Residue E205 is the Proton donor of the active site. Mg(2+) contacts are provided by D243, E292, and D319. Substrate-binding positions include E292, D319, K344, 371-374 (SHRS), and K395. K344 acts as the Proton acceptor in catalysis.

The protein belongs to the enolase family. As to quaternary structure, homooctamer. The cofactor is Mg(2+).

The protein resides in the cytoplasm. Its subcellular location is the secreted. It is found in the cell surface. The enzyme catalyses (2R)-2-phosphoglycerate = phosphoenolpyruvate + H2O. It functions in the pathway carbohydrate degradation; glycolysis; pyruvate from D-glyceraldehyde 3-phosphate: step 4/5. Its function is as follows. Catalyzes the reversible conversion of 2-phosphoglycerate (2-PG) into phosphoenolpyruvate (PEP). It is essential for the degradation of carbohydrates via glycolysis. Functionally, 'Moonlights' as a plasminogen receptor and plasmin activator. Binds host (human) plasminogen in vitro; enhances the activity of host tissue-specific plasminogen activator (tPA). The sequence is that of Enolase from Streptococcus pyogenes serotype M1.